Here is a 344-residue protein sequence, read N- to C-terminus: Secreted LysM effector LysM2 (344 aa).

The N-terminal stretch at 1–24 is a signal peptide; it reads MMAPKSLQTGLLILLLAKLKLAWG. Residues 36–80 form the LysM 1 domain; it reads YEAAASSGDTCTSFAAEWGLTEETFASLNPSAACPSLVAGQNYCM. Residues 88 to 134 are compositionally biased toward low complexity; sequence STTSSSSSTTSSSTTSSSTTSSSTTSSSTTTSSFTTTTASETTSTAA. Positions 88–141 are disordered; that stretch reads STTSSSSSTTSSSTTSSSTTSSSTTSSSTTTSSFTTTTASETTSTAANGVTTPM. LysM domains follow at residues 153-199, 216-262, and 296-342; these read KFDL…YVCV and KFWL…YICV.

The protein belongs to the secreted LysM effector family.

Might have a role in sequestration of chitin oligosaccharides (breakdown products of fungal cell walls that are released during invasion and act as triggers of host immunity) to dampen host defense. The sequence is that of Secreted LysM effector LysM2 from Penicillium expansum (Blue mold rot fungus).